Reading from the N-terminus, the 421-residue chain is Tol-Pal system protein TolA (421 aa).

Topologically, residues 1-13 are cytoplasmic; that stretch reads MSKATEQNDKLKR. Residues 14-34 traverse the membrane as a helical segment; it reads AIIISAVLHVILFAALIWSSF. Topologically, residues 35 to 421 are periplasmic; that stretch reads DENIEASAGG…FKNAPLDFKP (387 aa). The tract at residues 48–310 is domain II (alpha-helical); the sequence is SSIDAVMVDS…LSSGKNAPKT (263 aa). The interval 65 to 266 is disordered; that stretch reads KRMQSQESSA…KAAADKKAAA (202 aa). Basic and acidic residues-rich tracts occupy residues 73–175 and 206–266; these read SAKR…EAEA and EARK…KAAA. Repeat copies occupy residues 224-229, 230-234, 235-240, 241-245, 246-250, 251-255, 256-260, 261-266, 267-271, 272-277, 278-282, 283-287, and 288-292. The segment at 224–292 is 13 X tandem repeats of [EDA]-K(1,2)-A(2,4); the sequence is EKKAAAEKAA…EKAAAAKAAA (69 aa). The tract at residues 300–336 is disordered; the sequence is ELSSGKNAPKTGGGAKGNNASPAGSGNTKNNGASGAD. The domain III (functional) stretch occupies residues 311–421; sequence GGGAKGNNAS…FKNAPLDFKP (111 aa). Residues 317–332 show a composition bias toward polar residues; the sequence is NNASPAGSGNTKNNGA. C363 and C388 are oxidised to a cystine.

This sequence belongs to the TolA family. The Tol-Pal system is composed of five core proteins: the inner membrane proteins TolA, TolQ and TolR, the periplasmic protein TolB and the outer membrane protein Pal. They form a network linking the inner and outer membranes and the peptidoglycan layer. TolA interacts with TolQ and TolR via its N-terminal domain. Interacts with CpoB, and with the trimeric porins OmpC, OmpF, PhoE and LamB via its central domain. Interacts with TolB via its C-terminal domain. Also interacts with Pal via its C-terminal domain. This interaction is proton motive force dependent and requires TolQ and TolR.

Its subcellular location is the cell inner membrane. In terms of biological role, part of the Tol-Pal system, which plays a role in outer membrane invagination during cell division and is important for maintaining outer membrane integrity. The Tol-Pal system is also required for polar localization of chemoreceptors clusters. The system also appears to be required for the activity of several outer membrane-localized enzymes with cell wall remodeling activity. Is involved in the uptake of group A colicins (colicins A, E1, E2, E3, and K) and in the uptake of filamentous phage DNA. The sequence is that of Tol-Pal system protein TolA from Escherichia coli (strain K12).